A 760-amino-acid chain; its full sequence is ATP-dependent DNA helicase Hel308 (760 aa).

ATP is bound by residues Gln-28 and 46-53 (IPTASGKT). One can recognise a Helicase ATP-binding domain in the interval 33-199 (EMGLLEKKNL…WLGAALVLSE (167 aa)). Positions 144-147 (DEIH) match the DEAH box motif. The region spanning 232–426 (AVNLVLDTIK…SKLGTENALR (195 aa)) is the Helicase C-terminal domain.

This sequence belongs to the helicase family. Hel308 subfamily. Monomer.

The catalysed reaction is Couples ATP hydrolysis with the unwinding of duplex DNA by translocating in the 3'-5' direction.. It carries out the reaction ATP + H2O = ADP + phosphate + H(+). Functionally, DNA-dependent ATPase and 3'-5' DNA helicase that may be involved in repair of stalled replication forks. In Methanococcoides burtonii (strain DSM 6242 / NBRC 107633 / OCM 468 / ACE-M), this protein is ATP-dependent DNA helicase Hel308.